Consider the following 178-residue polypeptide: Ribosome maturation factor RimM (178 aa).

The PRC barrel domain maps to 94–174 (KNEFFWFDLI…RIDVINSFDI (81 aa)).

This sequence belongs to the RimM family. In terms of assembly, binds ribosomal protein uS19.

Its subcellular location is the cytoplasm. An accessory protein needed during the final step in the assembly of 30S ribosomal subunit, possibly for assembly of the head region. Essential for efficient processing of 16S rRNA. May be needed both before and after RbfA during the maturation of 16S rRNA. It has affinity for free ribosomal 30S subunits but not for 70S ribosomes. The chain is Ribosome maturation factor RimM from Aliarcobacter butzleri (strain RM4018) (Arcobacter butzleri).